Consider the following 1008-residue polypeptide: ATP-dependent DNA/RNA helicase DHX36 (1008 aa).

The tract at residues Met1–Gly51 is required for recruitment to cytoplasmic stress granules. The interval Met1–Lys58 is disordered. Positions Met1 to Ala104 are required for the pre-miR-134 transport. The necessary for nuclear and nucleolar caps localizations stretch occupies residues Met1–Met200. Gly residues predominate over residues Arg16–Gly48. Positions His53–Lys75 are DSM (DHX36-specific motif). Residues His53–Lys105 are required for G4-DNA- and G4-RNA-binding. A coiled-coil region spans residues Gln72 to Ile157. 2 recA-like domain regions span residues Asn106–Ile386 and Pro387–Leu628. The residue at position 161 (Ser161) is a Phosphoserine. Residues Val217 to Pro387 form the Helicase ATP-binding domain. Gly233–Thr238 contributes to the ATP binding site. A necessary for interaction with single-stranded DNA at the 3'-end of the G4-DNA structure region spans residues Arg265–Gln317. A DEAH box motif is present at residues Asp334 to His337. 2 residues coordinate Mg(2+): Glu335 and His337. The Helicase C-terminal domain occupies Ala477–Arg647. Residues Trp498–Ser557 form a necessary for interaction with single-stranded DNA at the 3'-end of the G4-DNA structure region. The Nuclear localization signal signature appears at Asp517 to Met528. Residues Ser557 and Arg602–Arg605 each bind ATP. Positions Pro629–Val698 are WH domain. 3 necessary for interaction with single-stranded DNA at the 3'-end of the G4-DNA structure regions span residues Glu638 to Pro697, Asn849 to Tyr860, and His870 to Tyr900. Positions Pro841 to Val905 are OB-fold-like subdomains. Lys947 bears the N6-acetyllysine mark. The residue at position 963 (Ser963) is a Phosphoserine.

The protein belongs to the DEAD box helicase family. DEAH subfamily. In terms of assembly, found in a multi-helicase-TICAM1 complex at least composed of DHX36, DDX1, DDX21 and TICAM1; this complex exists in resting cells with or without dsRNA poly(I:C) ligand stimulation. Interacts (via C-terminus) with TICAM1 (via TIR domain). Interacts (via C-terminus) with DDX21; this interaction serves as bridges to TICAM1. Interacts with TERT; this interaction is dependent on the ability of DHX36 to bind to the G-quadruplex RNA (G4-RNA) structure present in the telomerase RNA template component (TERC). Interacts with DKC1; this interaction is dependent on the ability of DHX36 to bind to the G4-RNA structure present in TERC. Interacts with PARN; this interaction stimulates PARN to enhance uPA mRNA decay. Interacts with EXOSC3; this interaction occurs in a RNase-insensitive manner. Interacts with EXOSC10; this interaction occurs in a RNase-insensitive manner. Interacts with ILF3; this interaction occurs in a RNA-dependent manner. Interacts with ELAVL1; this interaction occurs in an RNA-dependent manner. Interacts with DDX5; this interaction occurs in a RNA-dependent manner. Interacts with DDX17; this interaction occurs in a RNA-dependent manner. Interacts with HDAC1; this interaction occurs in a RNA-dependent manner. Interacts with HDAC3; this interaction occurs in a RNA-dependent manner. Interacts with HDAC4. Interacts with AGO1. Interacts with AGO2. Interacts with ERCC6. Mg(2+) is required as a cofactor. Highly expressed in testis.

It is found in the nucleus. The protein resides in the cytoplasm. It localises to the cytosol. Its subcellular location is the stress granule. The protein localises to the nucleus speckle. It is found in the chromosome. The protein resides in the telomere. It localises to the mitochondrion. Its subcellular location is the perikaryon. The protein localises to the cell projection. It is found in the dendrite. The protein resides in the axon. It carries out the reaction ATP + H2O = ADP + phosphate + H(+). Its activity is regulated as follows. ATPase activity is enhanced in the presence of homomeric poly(U) RNAs, but not by double-stranded DNA (dsDNA), double-stranded RNA (dsRNA) and tRNA. Functionally, multifunctional ATP-dependent helicase that unwinds G-quadruplex (G4) structures. Plays a role in many biological processes such as genomic integrity, gene expression regulations and as a sensor to initiate antiviral responses. G4 structures correspond to helical structures containing guanine tetrads. Binds with high affinity to and unwinds G4 structures that are formed in nucleic acids (G4-DNA and G4-RNA). Plays a role in genomic integrity. Converts the G4-RNA structure present in telomerase RNA template component (TREC) into a double-stranded RNA to promote P1 helix formation that acts as a template boundary ensuring accurate reverse transcription. Plays a role in transcriptional regulation. Resolves G4-DNA structures in promoters of genes, such as YY1, KIT/c-kit and ALPL and positively regulates their expression. Plays a role in post-transcriptional regulation. Unwinds a G4-RNA structure located in the 3'-UTR polyadenylation site of the pre-mRNA TP53 and stimulates TP53 pre-mRNA 3'-end processing in response to ultraviolet (UV)-induced DNA damage. Binds to the precursor-microRNA-134 (pre-miR-134) terminal loop and regulates its transport into the synapto-dendritic compartment. Involved in the pre-miR-134-dependent inhibition of target gene expression and the control of dendritic spine size. Plays a role in the regulation of cytoplasmic mRNA translation and mRNA stability. Binds to both G4-RNA structures and alternative non-quadruplex-forming sequence within the 3'-UTR of the PITX1 mRNA regulating negatively PITX1 protein expression. Binds to both G4-RNA structure in the 5'-UTR and AU-rich elements (AREs) localized in the 3'-UTR of NKX2-5 mRNA to either stimulate protein translation or induce mRNA decay in an ELAVL1-dependent manner, respectively. Also binds to ARE sequences present in several mRNAs mediating exosome-mediated 3'-5' mRNA degradation. Involved in cytoplasmic urokinase-type plasminogen activator (uPA) mRNA decay. Component of a multi-helicase-TICAM1 complex that acts as a cytoplasmic sensor of viral double-stranded RNA (dsRNA) and plays a role in the activation of a cascade of antiviral responses including the induction of pro-inflammatory cytokines via the adapter molecule TICAM1. Required for early embryonic development and hematopoiesis. Involved in the regulation of cardioblast differentiation and proliferation during heart development. Involved in spermatogonia differentiation. May play a role in ossification. The polypeptide is ATP-dependent DNA/RNA helicase DHX36 (Homo sapiens (Human)).